We begin with the raw amino-acid sequence, 885 residues long: Translation initiation factor IF-2 (885 aa).

The interval 1-295 (MTDNKDDKTI…EKFKRSQMQE (295 aa)) is disordered. The span at 63–77 (PVAAAPAAARPAEQR) shows a compositional bias: low complexity. A compositionally biased stretch (pro residues) spans 78–94 (PMPPQPSGRPAPQPQPH). A compositionally biased stretch (basic and acidic residues) spans 130 to 183 (RDAEEAKRRAEEEVRRRREEEERIAREKEEAARRAAEEAARPAVEAEKVEEKVE). Residues 184 to 201 (AATPAVAETRPLSERPAP) show a composition bias toward low complexity. A tr-type G domain is found at 383–550 (ARPPIVTIMG…AILLQSEILD (168 aa)). The interval 392–399 (GHVDHGKT) is G1. 392-399 (GHVDHGKT) is a binding site for GTP. Positions 417–421 (GITQH) are G2. A G3 region spans residues 438-441 (DTPG). Residues 438-442 (DTPGH) and 492-495 (NKID) contribute to the GTP site. The segment at 492 to 495 (NKID) is G4. The G5 stretch occupies residues 528–530 (SAK).

Belongs to the TRAFAC class translation factor GTPase superfamily. Classic translation factor GTPase family. IF-2 subfamily.

It localises to the cytoplasm. In terms of biological role, one of the essential components for the initiation of protein synthesis. Protects formylmethionyl-tRNA from spontaneous hydrolysis and promotes its binding to the 30S ribosomal subunits. Also involved in the hydrolysis of GTP during the formation of the 70S ribosomal complex. The sequence is that of Translation initiation factor IF-2 from Sinorhizobium medicae (strain WSM419) (Ensifer medicae).